The following is a 460-amino-acid chain: Muscarinic acetylcholine receptor M1 (460 aa).

The Extracellular portion of the chain corresponds to 1–22; that stretch reads MNTSAPPAVSPNITVLAPGKGP. N-linked (GlcNAc...) asparagine glycans are attached at residues Asn-2 and Asn-12. The helical transmembrane segment at 23 to 48 threads the bilayer; that stretch reads WQVAFIGITTGLLSLATVTGNLLVLI. The Cytoplasmic segment spans residues 49–62; that stretch reads SFKVNTELKTVNNY. The chain crosses the membrane as a helical span at residues 63–84; that stretch reads FLLSLACADLIIGTFSMNLYTT. The Extracellular portion of the chain corresponds to 85–95; the sequence is YLLMGHWALGT. The chain crosses the membrane as a helical span at residues 96 to 121; it reads LACDLWLALDYVASNASVMNLLLISF. An intrachain disulfide couples Cys-98 to Cys-178. At 122–142 the chain is on the cytoplasmic side; sequence DRYFSVTRPLSYRAKRTPRRA. Residues 143–164 traverse the membrane as a helical segment; it reads ALMIGLAWLVSFVLWAPAILFW. The Extracellular portion of the chain corresponds to 165–185; that stretch reads QYLVGERTVLAGQCYIQFLSQ. A helical transmembrane segment spans residues 186 to 209; sequence PIITFGTAMAAFYLPVTVMCTLYW. Residues 210–366 lie on the Cytoplasmic side of the membrane; sequence RIYRETESRA…LVKEKKAART (157 aa). 3 disordered regions span residues 225–256, 274–297, and 310–351; these read LQGSETPGKGGGSSSSSERSQPGAEGSPGTPP, WKEEEEEDEGSMESLTSSEGEEPG, and EAQA…QLAK. Thr-230 is subject to Phosphothreonine. Residues 238–247 are compositionally biased toward low complexity; sequence SSSSERSQPG. A compositionally biased stretch (basic residues) spans 328 to 343; the sequence is RPTKKGRDRAGKGQKP. The chain crosses the membrane as a helical span at residues 367–390; that stretch reads LSAILLAFILTWTPYNIMVLVSTF. Residues 391–397 lie on the Extracellular side of the membrane; sequence CKDCVPE. A helical membrane pass occupies residues 398–420; it reads TLWELGYWLCYVNSTINPMCYAL. The Cytoplasmic portion of the chain corresponds to 421-460; the sequence is CNKAFRDTFRLLLLCRWDKRRWRKIPKRPGSVHRTPSRQC. Thr-428 bears the Phosphothreonine mark. Ser-451 is modified (phosphoserine). Position 455 is a phosphothreonine (Thr-455). Ser-457 carries the phosphoserine modification.

This sequence belongs to the G-protein coupled receptor 1 family. Muscarinic acetylcholine receptor subfamily. CHRM1 sub-subfamily. Interacts with GPRASP2. Interacts with TMEM147.

The protein localises to the cell membrane. It is found in the postsynaptic cell membrane. The muscarinic acetylcholine receptor mediates various cellular responses, including inhibition of adenylate cyclase, breakdown of phosphoinositides and modulation of potassium channels through the action of G proteins. Primary transducing effect is Pi turnover. In Pongo abelii (Sumatran orangutan), this protein is Muscarinic acetylcholine receptor M1 (CHRM1).